A 230-amino-acid chain; its full sequence is Biosynthetic peptidoglycan transglycosylase (230 aa).

The helical transmembrane segment at 10–30 (IFLFFIAVIFVYQFWIFSQIV) threads the bilayer.

Belongs to the glycosyltransferase 51 family.

The protein resides in the cell inner membrane. The enzyme catalyses [GlcNAc-(1-&gt;4)-Mur2Ac(oyl-L-Ala-gamma-D-Glu-L-Lys-D-Ala-D-Ala)](n)-di-trans,octa-cis-undecaprenyl diphosphate + beta-D-GlcNAc-(1-&gt;4)-Mur2Ac(oyl-L-Ala-gamma-D-Glu-L-Lys-D-Ala-D-Ala)-di-trans,octa-cis-undecaprenyl diphosphate = [GlcNAc-(1-&gt;4)-Mur2Ac(oyl-L-Ala-gamma-D-Glu-L-Lys-D-Ala-D-Ala)](n+1)-di-trans,octa-cis-undecaprenyl diphosphate + di-trans,octa-cis-undecaprenyl diphosphate + H(+). The protein operates within cell wall biogenesis; peptidoglycan biosynthesis. Its function is as follows. Peptidoglycan polymerase that catalyzes glycan chain elongation from lipid-linked precursors. The polypeptide is Biosynthetic peptidoglycan transglycosylase (Nitrosospira multiformis (strain ATCC 25196 / NCIMB 11849 / C 71)).